Reading from the N-terminus, the 334-residue chain is MTHKISVLHQDKKFDFSLRPKKLTEFCGQKQLKERLDLFLRAAVQRNEVPGHCLFYGPPGLGKTSLAHIMANTIGKGLVIASGPQLLKPSDLIGLLTGLQEGDIFFIDEIHRMGKAAEEYLYPAMEDFKVDITLDSGPGARSVRLDLAPFTLVGATTRAGMLSEPLRTRFAFTGRVDYYTDEDLVSILSRSSQLLAIEANQETLLEIARRARGTPRLANNLLRWVRDFAQMREGNCINSAVAEKALAMLLIDNLGLNEIDIKLLSVMIDFYQGGPVGMKTLAMAVGEDVRTLEDMYEPFLILKGLVQRTARGRVATPLAYEHLNRNPKDRWGEE.

The segment at 1–179 is large ATPase domain (RuvB-L); the sequence is MTHKISVLHQ…FAFTGRVDYY (179 aa). Residues L18, R19, G60, K63, T64, S65, 126–128, R169, Y179, and R216 each bind ATP; that span reads EDF. T64 serves as a coordination point for Mg(2+). The tract at residues 180–250 is small ATPAse domain (RuvB-S); that stretch reads TDEDLVSILS…VAEKALAMLL (71 aa). Residues 253 to 334 form a head domain (RuvB-H) region; that stretch reads NLGLNEIDIK…RNPKDRWGEE (82 aa). 2 residues coordinate DNA: R308 and R313.

This sequence belongs to the RuvB family. Homohexamer. Forms an RuvA(8)-RuvB(12)-Holliday junction (HJ) complex. HJ DNA is sandwiched between 2 RuvA tetramers; dsDNA enters through RuvA and exits via RuvB. An RuvB hexamer assembles on each DNA strand where it exits the tetramer. Each RuvB hexamer is contacted by two RuvA subunits (via domain III) on 2 adjacent RuvB subunits; this complex drives branch migration. In the full resolvosome a probable DNA-RuvA(4)-RuvB(12)-RuvC(2) complex forms which resolves the HJ.

It localises to the cytoplasm. The enzyme catalyses ATP + H2O = ADP + phosphate + H(+). In terms of biological role, the RuvA-RuvB-RuvC complex processes Holliday junction (HJ) DNA during genetic recombination and DNA repair, while the RuvA-RuvB complex plays an important role in the rescue of blocked DNA replication forks via replication fork reversal (RFR). RuvA specifically binds to HJ cruciform DNA, conferring on it an open structure. The RuvB hexamer acts as an ATP-dependent pump, pulling dsDNA into and through the RuvAB complex. RuvB forms 2 homohexamers on either side of HJ DNA bound by 1 or 2 RuvA tetramers; 4 subunits per hexamer contact DNA at a time. Coordinated motions by a converter formed by DNA-disengaged RuvB subunits stimulates ATP hydrolysis and nucleotide exchange. Immobilization of the converter enables RuvB to convert the ATP-contained energy into a lever motion, pulling 2 nucleotides of DNA out of the RuvA tetramer per ATP hydrolyzed, thus driving DNA branch migration. The RuvB motors rotate together with the DNA substrate, which together with the progressing nucleotide cycle form the mechanistic basis for DNA recombination by continuous HJ branch migration. Branch migration allows RuvC to scan DNA until it finds its consensus sequence, where it cleaves and resolves cruciform DNA. The polypeptide is Holliday junction branch migration complex subunit RuvB (Chlamydia trachomatis serovar L2 (strain ATCC VR-902B / DSM 19102 / 434/Bu)).